The sequence spans 144 residues: Large ribosomal subunit protein uL15 (144 aa).

Polar residues predominate over residues 1 to 10 (MYLNTISPSR). The tract at residues 1 to 51 (MYLNTISPSRGSKHLSKRVGRGIGSGLGKTGGRGHKGQKSRSGGKVRLGFE) is disordered. Residues 11–20 (GSKHLSKRVG) show a composition bias toward basic residues. Residues 21–31 (RGIGSGLGKTG) show a composition bias toward gly residues. Over residues 32–44 (GRGHKGQKSRSGG) the composition is skewed to basic residues.

Belongs to the universal ribosomal protein uL15 family. In terms of assembly, part of the 50S ribosomal subunit.

In terms of biological role, binds to the 23S rRNA. This is Large ribosomal subunit protein uL15 from Blochmanniella pennsylvanica (strain BPEN).